A 229-amino-acid polypeptide reads, in one-letter code: Potassium/proton antiporter CemA (229 aa).

A run of 3 helical transmembrane segments spans residues 6-26 (AFIP…ISLC), 107-127 (ILHF…SFWG), and 189-209 (ILSG…KYWI).

The protein belongs to the CemA family.

It is found in the plastid. It localises to the chloroplast inner membrane. It carries out the reaction K(+)(in) + H(+)(out) = K(+)(out) + H(+)(in). Its function is as follows. Contributes to K(+)/H(+) antiport activity by supporting proton efflux to control proton extrusion and homeostasis in chloroplasts in a light-dependent manner to modulate photosynthesis. Prevents excessive induction of non-photochemical quenching (NPQ) under continuous-light conditions. Indirectly promotes efficient inorganic carbon uptake into chloroplasts. The polypeptide is Potassium/proton antiporter CemA (Arabidopsis thaliana (Mouse-ear cress)).